Here is a 121-residue protein sequence, read N- to C-terminus: Large ribosomal subunit protein bL12 (121 aa).

Belongs to the bacterial ribosomal protein bL12 family. As to quaternary structure, homodimer. Part of the ribosomal stalk of the 50S ribosomal subunit. Forms a multimeric L10(L12)X complex, where L10 forms an elongated spine to which 2 to 4 L12 dimers bind in a sequential fashion. Binds GTP-bound translation factors.

In terms of biological role, forms part of the ribosomal stalk which helps the ribosome interact with GTP-bound translation factors. Is thus essential for accurate translation. The chain is Large ribosomal subunit protein bL12 from Ureaplasma urealyticum serovar 10 (strain ATCC 33699 / Western).